Here is a 502-residue protein sequence, read N- to C-terminus: MSENKDKNNILKRHIEEDNNIDNGKRKKLELGKDMEDVHDIASKEMEEHETTPIISQNLYLDTINRKLLDFDFEKVCSVSLTNLSVYACLVCGRYFQGRGPSSHAYFHALTENHHVFVNCSTLKFYVLPESYQVESSALQDIAYVMRPTFTKLEVQRLDHTPQLSYDLMLKPYVPGFVGMNNIKNNDYFNVVIHMLAHVKPFRNYFLLKNFDNCPQLVQRLAILIRKLWNHKAFKSHVSPQELIQEVTVLSHKKYSINEQKDPVEFLSWFLNTLHNCLGGKKSTIAKPTSIVHYSFQGFVRIESQKIRQHAEKGEQVVFTGDRVIQTNVVPFLYLTLDLPPKPIFQDEFEGNIIPQVELKEILNKYNGVHTQELAGMRRRFHLMTAPPYFIFHIKRFMKNNYFTERNQTIVTFPLDDFDMSPFIDDSFIQSNPKISTKYNLVANIIHESVTHAEEEFHNFRIQIRNPSTNKWYQIQDLYVEEISSDMIRLGESFIQLWERSS.

The segment at 56–153 adopts a UBP-type; degenerate zinc-finger fold; the sequence is SQNLYLDTIN…YVMRPTFTKL (98 aa). Residues Cys89, Cys92, His108, and His114 each contribute to the Zn(2+) site. In terms of domain architecture, USP spans 178–501; that stretch reads VGMNNIKNND…ESFIQLWERS (324 aa).

This sequence belongs to the peptidase C19 family.

The protein localises to the nucleus. Its function is as follows. May play a role in mRNA splicing. It is unsure if the protein really exhibits hydrolase activity. Could be a competitor of ubiquitin C-terminal hydrolases (UCHs). This chain is Probable mRNA-splicing protein ubp10 (ubp10), found in Schizosaccharomyces pombe (strain 972 / ATCC 24843) (Fission yeast).